The primary structure comprises 496 residues: Pituitary adenylate cyclase-activating polypeptide type I receptor (496 aa).

The first 20 residues, 1 to 20, serve as a signal peptide directing secretion; sequence MARTLQLSLTALLLLPMAIA. Topologically, residues 21–152 are extracellular; sequence MHSDCIFKKE…SGDQDYYYLS (132 aa). Cystine bridges form between Cys-34–Cys-63, Cys-54–Cys-118, and Cys-77–Cys-134. Asn-48, Asn-60, and Asn-117 each carry an N-linked (GlcNAc...) asparagine glycan. Residues 125–139 are important for ADCYAP1/PACAP ligand binding and specificity; that stretch reads EPFPHYFDACGFDDY. An important for ligand binding and specificity region spans residues 125-139; the sequence is EPFPHYFDACGFDDY. A helical transmembrane segment spans residues 153 to 177; the sequence is VKALYTVGYSTSLVTLTTAMVILCR. Over 178-187 the chain is Cytoplasmic; sequence FRKLHCTRNF. Residues 188–208 form a helical membrane-spanning segment; it reads IHMNLFVSFMLRAISVFIKDW. Residues 209–223 are Extracellular-facing; sequence ILYAEQDSSHCFVST. A helical membrane pass occupies residues 224–249; that stretch reads VECKAVMVFFHYCVVSNYFWLFIEGL. A disulfide bridge links Cys-226 with Cys-296. The Cytoplasmic portion of the chain corresponds to 250-267; it reads YLFTLLVETFFPERRYFY. A helical membrane pass occupies residues 268–290; sequence WYTIIGWGTPTVCVTVWAVLRLY. Over 291–302 the chain is Extracellular; the sequence is FDDAGCWDMNDS. The helical transmembrane segment at 303-329 threads the bilayer; it reads TALWWVIKGPVVGSIMVNFVLFIGIII. Topologically, residues 330–347 are cytoplasmic; sequence ILVQKLQSPDMGGNESSI. A helical transmembrane segment spans residues 348-402; sequence YFSCVQKCYCKPQRAQQHSCKMSELSTITLRLARSTLLLIPLFGIHYTVFAFSPE. The Extracellular portion of the chain corresponds to 403–407; the sequence is NVSKR. Residues 408–431 form a helical membrane-spanning segment; it reads ERLVFELGLGSFQGFVVAVLYCFL. Residues 432–496 lie on the Cytoplasmic side of the membrane; it reads NGEVQAEIKR…SSLPADNLAT (65 aa). A phosphoserine mark is found at Ser-462 and Ser-475.

The protein belongs to the G-protein coupled receptor 2 family. In terms of assembly, interacts with maxadilan, a vasodilator peptide from Lutzomyia longipalpis saliva; the interaction results in ADCYAP1R1 activation.

The protein localises to the cell membrane. Its function is as follows. G protein-coupled receptor activated by the neuropeptide pituitary adenylate cyclase-activating polypeptide (ADCYAP1/PACAP). Binds both PACAP27 and PACAP38 bioactive peptides. Ligand binding causes a conformation change that triggers signaling via guanine nucleotide-binding proteins (G proteins) and modulates the activity of downstream effectors. Activates cAMP-dependent pathway. May regulate the release of adrenocorticotropin, luteinizing hormone, growth hormone, prolactin, epinephrine, and catecholamine. May play a role in spermatogenesis and sperm motility. Causes smooth muscle relaxation and secretion in the gastrointestinal tract. This Mus musculus (Mouse) protein is Pituitary adenylate cyclase-activating polypeptide type I receptor.